The primary structure comprises 521 residues: Two-component response regulator ARR11 (521 aa).

One can recognise a Response regulatory domain in the interval 12 to 127 (RVLVVDDDPT…ELKIIWQHVL (116 aa)). Residue aspartate 63 is modified to 4-aspartylphosphate. A Nuclear localization signal motif is present at residues 192 to 195 (KKAR). The segment at residues 195 to 246 (RVVWSFELHHKFVNAVNQIGCDHKAGPKKILDLMNVPWLTRENVASHLQKYR) is a DNA-binding region (myb-like GARP).

Belongs to the ARR family. Type-B subfamily. Binds the target DNA as a monomer. Post-translationally, two-component system major event consists of a His-to-Asp phosphorelay between a sensor histidine kinase (HK) and a response regulator (RR). In plants, the His-to-Asp phosphorelay involves an additional intermediate named Histidine-containing phosphotransfer protein (HPt). This multistep phosphorelay consists of a His-Asp-His-Asp sequential transfer of a phosphate group between first a His and an Asp of the HK protein, followed by the transfer to a conserved His of the HPt protein and finally the transfer to an Asp in the receiver domain of the RR protein. In terms of tissue distribution, detected in the whole plant. Predominantly expressed in roots and stems.

The protein localises to the nucleus. Transcriptional activator that binds specifically to the DNA sequence 5'-[AG]GATT-3'. Functions as a response regulator involved in His-to-Asp phosphorelay signal transduction system. Phosphorylation of the Asp residue in the receiver domain activates the ability of the protein to promote the transcription of target genes. Could directly activate some type-A response regulators in response to cytokinins. This Arabidopsis thaliana (Mouse-ear cress) protein is Two-component response regulator ARR11 (ARR11).